Consider the following 110-residue polypeptide: Large ribosomal subunit protein uL22 (110 aa).

It belongs to the universal ribosomal protein uL22 family. Part of the 50S ribosomal subunit.

In terms of biological role, this protein binds specifically to 23S rRNA; its binding is stimulated by other ribosomal proteins, e.g. L4, L17, and L20. It is important during the early stages of 50S assembly. It makes multiple contacts with different domains of the 23S rRNA in the assembled 50S subunit and ribosome. Functionally, the globular domain of the protein is located near the polypeptide exit tunnel on the outside of the subunit, while an extended beta-hairpin is found that lines the wall of the exit tunnel in the center of the 70S ribosome. This chain is Large ribosomal subunit protein uL22, found in Acidovorax ebreus (strain TPSY) (Diaphorobacter sp. (strain TPSY)).